The following is a 393-amino-acid chain: Protein TsgA (393 aa).

The next 12 membrane-spanning stretches (helical) occupy residues 11 to 31 (WISFLSYALTGALVIVTGMVM), 51 to 71 (FLNAGILISIFLNAWLMEIVP), 78 to 98 (FGFLLMVLAVAGLMFSHSLAL), 101 to 121 (AAMFILGVVSGITMSIGTFLI), 134 to 154 (LLFTDSFFSMAGMIFPMIAAF), 162 to 182 (WYWVYACIGLVYVAIFILTFG), 206 to 226 (IGVLFLSVAALCYILGQLGFI), 245 to 265 (TLVSNFWMSYMVGMWAFSFIL), 273 to 293 (ILTVLAGLAAILMYVFNTGTP), 297 to 317 (AWSILTLGFFSSAIYTTIITL), 332 to 352 (FVLTCGTIGTMLTFVVTGPIV), and 361 to 381 (LLTANGLYAVVFVMCFLLGFV).

It belongs to the major facilitator superfamily. TsgA family.

It localises to the cell inner membrane. This Shigella dysenteriae serotype 1 (strain Sd197) protein is Protein TsgA.